Consider the following 120-residue polypeptide: Succinate dehydrogenase assembly factor 3, mitochondrial (120 aa).

The N-terminal 36 residues, 1 to 36 (MSRILMSQLTHPQRVRLLYKTILRLHRGLPAELRAL), are a transit peptide targeting the mitochondrion.

Belongs to the complex I LYR family. SDHAF3 subfamily. As to quaternary structure, interacts with SdhB within an SdhA-SdhB subcomplex.

The protein resides in the mitochondrion matrix. Plays an essential role in the assembly of succinate dehydrogenase (SDH), an enzyme complex (also referred to as respiratory complex II) that is a component of both the tricarboxylic acid (TCA) cycle and the mitochondrial electron transport chain, and which couples the oxidation of succinate to fumarate with the reduction of ubiquinone (coenzyme Q) to ubiquinol. Promotes maturation of the iron-sulfur protein subunit SdhB of the SDH catalytic dimer, protecting it from the deleterious effects of oxidants. This is Succinate dehydrogenase assembly factor 3, mitochondrial from Drosophila melanogaster (Fruit fly).